A 494-amino-acid chain; its full sequence is Glutamate--tRNA ligase (494 aa).

Residues 10-20 carry the 'HIGH' region motif; that stretch reads PSPTGDPHVGT. Residues C107, C109, C134, and H136 each contribute to the Zn(2+) site. The 'KMSKS' region signature appears at 251-255; that stretch reads KLSKR. Residue K254 participates in ATP binding.

The protein belongs to the class-I aminoacyl-tRNA synthetase family. Glutamate--tRNA ligase type 1 subfamily. In terms of assembly, monomer. Requires Zn(2+) as cofactor.

The protein resides in the cytoplasm. The catalysed reaction is tRNA(Glu) + L-glutamate + ATP = L-glutamyl-tRNA(Glu) + AMP + diphosphate. Its function is as follows. Catalyzes the attachment of glutamate to tRNA(Glu) in a two-step reaction: glutamate is first activated by ATP to form Glu-AMP and then transferred to the acceptor end of tRNA(Glu). This chain is Glutamate--tRNA ligase, found in Pseudomonas paraeruginosa (strain DSM 24068 / PA7) (Pseudomonas aeruginosa (strain PA7)).